Consider the following 150-residue polypeptide: Large ribosomal subunit protein bL9 (150 aa).

It belongs to the bacterial ribosomal protein bL9 family.

Its function is as follows. Binds to the 23S rRNA. The chain is Large ribosomal subunit protein bL9 from Mycoplasmopsis pulmonis (strain UAB CTIP) (Mycoplasma pulmonis).